Consider the following 454-residue polypeptide: Oxygen-dependent coproporphyrinogen-III oxidase, mitochondrial (454 aa).

Residues 1–110 (MALQLGRLSS…MLPKTSGTRA (110 aa)) constitute a mitochondrion transit peptide. Positions 43–70 (AAGRVCRPPGPAGTEQSRGLGHGSTSRG) are disordered. A Phosphoserine modification is found at Ser-112. The tract at residues 193 to 202 (VLQDGCVFEK) is important for dimerization. Ser-244 provides a ligand contact to coproporphyrinogen III. His-258 (proton donor) is an active-site residue. 260 to 262 (NYR) serves as a coordination point for coproporphyrinogen III. The important for dimerization stretch occupies residues 392 to 428 (YVEFNLLYDRGTKFGLFTPGSRIESILMSLPLTARWE). Lys-404 carries the post-translational modification N6-acetyllysine; alternate. N6-succinyllysine; alternate is present on Lys-404. 411 to 413 (GSR) contacts coproporphyrinogen III.

This sequence belongs to the aerobic coproporphyrinogen-III oxidase family. As to quaternary structure, homodimer.

The protein localises to the mitochondrion intermembrane space. The catalysed reaction is coproporphyrinogen III + O2 + 2 H(+) = protoporphyrinogen IX + 2 CO2 + 2 H2O. The protein operates within porphyrin-containing compound metabolism; protoporphyrin-IX biosynthesis; protoporphyrinogen-IX from coproporphyrinogen-III (O2 route): step 1/1. Catalyzes the aerobic oxidative decarboxylation of propionate groups of rings A and B of coproporphyrinogen-III to yield the vinyl groups in protoporphyrinogen-IX and participates to the sixth step in the heme biosynthetic pathway. The chain is Oxygen-dependent coproporphyrinogen-III oxidase, mitochondrial from Homo sapiens (Human).